Consider the following 376-residue polypeptide: Mitogen-activated protein kinase ERK-A (376 aa).

Residues Y38–L326 form the Protein kinase domain. Residues I44–V52 and K67 each bind ATP. The active-site Proton acceptor is the D162. T198 is modified (phosphothreonine). A TXY motif is present at residues T198–Y200. Phosphotyrosine is present on Y200.

The protein belongs to the protein kinase superfamily. CMGC Ser/Thr protein kinase family. MAP kinase subfamily. The cofactor is Mg(2+). Dually phosphorylated on Thr-198 and Tyr-200, which activates the enzyme. Phosphorylated on tyrosine residue(s) in response to insulin. In terms of tissue distribution, in third instar larvae, expressed in eye imaginal disks. In adults, expressed in head and body.

The protein resides in the cytoplasm. Its subcellular location is the nucleus. The enzyme catalyses L-seryl-[protein] + ATP = O-phospho-L-seryl-[protein] + ADP + H(+). It carries out the reaction L-threonyl-[protein] + ATP = O-phospho-L-threonyl-[protein] + ADP + H(+). With respect to regulation, activated by tyrosine and threonine phosphorylation. Functionally, serine/threonine kinase which acts as an essential component of the MAP kinase signal transduction pathway to regulate proliferation, differentiation and effect cell fate decisions in various tissues. Required downstream of phl/Raf in the sev/sevenless, tor/torso, and EGF receptor homolog Egfr signal transduction pathways. Required for embryonic epithelial tissue repair. During larval development, mediates Ptth/tor signaling leading to the production of ecdysone, a hormone required for the initiation of metamorphosis. In Drosophila melanogaster (Fruit fly), this protein is Mitogen-activated protein kinase ERK-A.